The following is a 738-amino-acid chain: Outer membrane protein assembly factor BamA (738 aa).

Positions 1–13 (MVWLLFLSSFCFA) are cleaved as a signal peptide. POTRA domains follow at residues 14 to 81 (DEVV…LQEN), 82 to 159 (PILR…VKEA), 162 to 248 (TVIR…LKEG), 251 to 329 (YSFG…VVST), and 332 to 404 (YRIR…VKER).

Belongs to the BamA family. As to quaternary structure, part of the Bam complex.

The protein localises to the cell outer membrane. Its function is as follows. Part of the outer membrane protein assembly complex, which is involved in assembly and insertion of beta-barrel proteins into the outer membrane. This chain is Outer membrane protein assembly factor BamA, found in Neorickettsia risticii (strain Illinois).